The primary structure comprises 505 residues: RNA-splicing ligase RtcB homolog (505 aa).

Residues Asp-119, Cys-122, His-227, His-259, and His-353 each coordinate Mn(2+). 226-230 (NHYGE) provides a ligand contact to GMP. GMP contacts are provided by residues 353–354 (HN), 402–405 (GGTM), Ser-409, 428–431 (HGAG), and Lys-504. His-428 functions as the GMP-histidine intermediate in the catalytic mechanism.

The protein belongs to the RtcB family. In terms of assembly, catalytic component of the tRNA-splicing ligase complex. Mn(2+) serves as cofactor.

The catalysed reaction is a 3'-end 3'-phospho-ribonucleotide-RNA + a 5'-end dephospho-ribonucleoside-RNA + GTP = a ribonucleotidyl-ribonucleotide-RNA + GMP + diphosphate. It carries out the reaction a 3'-end 2',3'-cyclophospho-ribonucleotide-RNA + a 5'-end dephospho-ribonucleoside-RNA + GTP + H2O = a ribonucleotidyl-ribonucleotide-RNA + GMP + diphosphate + H(+). In terms of biological role, catalytic subunit of the tRNA-splicing ligase complex that acts by directly joining spliced tRNA halves to mature-sized tRNAs by incorporating the precursor-derived splice junction phosphate into the mature tRNA as a canonical 3',5'-phosphodiester. May act as an RNA ligase with broad substrate specificity, and may function toward other RNAs. This Brugia malayi (Filarial nematode worm) protein is RNA-splicing ligase RtcB homolog.